The primary structure comprises 186 residues: Elongation factor P (186 aa).

This sequence belongs to the elongation factor P family.

It localises to the cytoplasm. Its pathway is protein biosynthesis; polypeptide chain elongation. Its function is as follows. Involved in peptide bond synthesis. Stimulates efficient translation and peptide-bond synthesis on native or reconstituted 70S ribosomes in vitro. Probably functions indirectly by altering the affinity of the ribosome for aminoacyl-tRNA, thus increasing their reactivity as acceptors for peptidyl transferase. The chain is Elongation factor P from Cupriavidus necator (strain ATCC 17699 / DSM 428 / KCTC 22496 / NCIMB 10442 / H16 / Stanier 337) (Ralstonia eutropha).